We begin with the raw amino-acid sequence, 181 residues long: Protein csk22 (181 aa).

The next 5 helical transmembrane spans lie at 5–22 (LQSVYPAIIIIFFLYKKI), 35–57 (WLFTRIILFSLFAFGLSIFSAIH), 61–78 (YGYLILGILGGWLLVFFA), 91–113 (IYFRTHIWVEVILLTLFLSRFLY), and 140–162 (LTIGVCFLIAVYYIGFSSFIIKL).

It localises to the cell membrane. The chain is Protein csk22 (csk22) from Bacillus subtilis (strain 168).